The primary structure comprises 179 residues: NADH-quinone oxidoreductase subunit B (179 aa).

Cys-53, Cys-54, Cys-118, and Cys-148 together coordinate [4Fe-4S] cluster.

The protein belongs to the complex I 20 kDa subunit family. NDH-1 is composed of 14 different subunits. Subunits NuoB, C, D, E, F, and G constitute the peripheral sector of the complex. [4Fe-4S] cluster is required as a cofactor.

It is found in the cell membrane. It catalyses the reaction a quinone + NADH + 5 H(+)(in) = a quinol + NAD(+) + 4 H(+)(out). NDH-1 shuttles electrons from NADH, via FMN and iron-sulfur (Fe-S) centers, to quinones in the respiratory chain. The immediate electron acceptor for the enzyme in this species is believed to be a menaquinone. Couples the redox reaction to proton translocation (for every two electrons transferred, four hydrogen ions are translocated across the cytoplasmic membrane), and thus conserves the redox energy in a proton gradient. This chain is NADH-quinone oxidoreductase subunit B, found in Bacillus thuringiensis (strain Al Hakam).